The sequence spans 335 residues: Phenylalanine--tRNA ligase alpha subunit (335 aa).

Glu262 provides a ligand contact to Mg(2+).

The protein belongs to the class-II aminoacyl-tRNA synthetase family. Phe-tRNA synthetase alpha subunit type 1 subfamily. As to quaternary structure, tetramer of two alpha and two beta subunits. It depends on Mg(2+) as a cofactor.

Its subcellular location is the cytoplasm. It carries out the reaction tRNA(Phe) + L-phenylalanine + ATP = L-phenylalanyl-tRNA(Phe) + AMP + diphosphate + H(+). The chain is Phenylalanine--tRNA ligase alpha subunit from Prochlorococcus marinus (strain NATL2A).